The primary structure comprises 337 residues: Tryptophan--tRNA ligase (337 aa).

ATP-binding positions include 9–11 (RPT) and 17–18 (GH). The short motif at 10–18 (PTGRLHLGH) is the 'HIGH' region element. An L-tryptophan-binding site is contributed by D137. ATP-binding positions include 149 to 151 (GKD), L187, and 195 to 199 (KMSKS). A 'KMSKS' region motif is present at residues 195 to 199 (KMSKS).

The protein belongs to the class-I aminoacyl-tRNA synthetase family. In terms of assembly, homodimer.

The protein resides in the cytoplasm. It carries out the reaction tRNA(Trp) + L-tryptophan + ATP = L-tryptophyl-tRNA(Trp) + AMP + diphosphate + H(+). In terms of biological role, catalyzes the attachment of tryptophan to tRNA(Trp). The polypeptide is Tryptophan--tRNA ligase (Treponema pallidum (strain Nichols)).